A 235-amino-acid chain; its full sequence is Peroxisomal membrane protein 11C (235 aa).

At 1-91 the chain is on the cytoplasmic side; sequence MSTLETTRAE…LPLVLLGKSK (91 aa). The helical transmembrane segment at 92–108 threads the bilayer; sequence NALLSTFLFLDQIVWLG. Topologically, residues 109–206 are lumenal; the sequence is RTGIYKDKER…LLQLAPKKVT (98 aa). The chain crosses the membrane as a helical span at residues 207-226; it reads PRVTGAFGFASSLISCYQLL. Topologically, residues 227–235 are cytoplasmic; sequence PSHPKSKMV.

The protein belongs to the peroxin-11 family. As to quaternary structure, homooligomer. Interacts with ARC5 and FIS1B on peroxisomes. As to expression, expressed in roots and developing siliques.

It is found in the peroxisome membrane. Involved in peroxisomal proliferation. Promotes peroxisomal duplication, aggregation or elongation without fission. In Arabidopsis thaliana (Mouse-ear cress), this protein is Peroxisomal membrane protein 11C (PEX11C).